Here is a 427-residue protein sequence, read N- to C-terminus: Enolase (427 aa).

A (2R)-2-phosphoglycerate-binding site is contributed by Gln-162. The active-site Proton donor is Glu-204. Mg(2+) is bound by residues Asp-241, Glu-282, and Asp-309. Positions 334, 363, 364, and 385 each coordinate (2R)-2-phosphoglycerate. Lys-334 acts as the Proton acceptor in catalysis.

It belongs to the enolase family. It depends on Mg(2+) as a cofactor.

The protein localises to the cytoplasm. It is found in the secreted. The protein resides in the cell surface. The catalysed reaction is (2R)-2-phosphoglycerate = phosphoenolpyruvate + H2O. Its pathway is carbohydrate degradation; glycolysis; pyruvate from D-glyceraldehyde 3-phosphate: step 4/5. Functionally, catalyzes the reversible conversion of 2-phosphoglycerate (2-PG) into phosphoenolpyruvate (PEP). It is essential for the degradation of carbohydrates via glycolysis. The chain is Enolase from Frankia casuarinae (strain DSM 45818 / CECT 9043 / HFP020203 / CcI3).